The sequence spans 211 residues: ATP phosphoribosyltransferase (211 aa).

It belongs to the ATP phosphoribosyltransferase family. Short subfamily. As to quaternary structure, heteromultimer composed of HisG and HisZ subunits.

Its subcellular location is the cytoplasm. It catalyses the reaction 1-(5-phospho-beta-D-ribosyl)-ATP + diphosphate = 5-phospho-alpha-D-ribose 1-diphosphate + ATP. The protein operates within amino-acid biosynthesis; L-histidine biosynthesis; L-histidine from 5-phospho-alpha-D-ribose 1-diphosphate: step 1/9. Its function is as follows. Catalyzes the condensation of ATP and 5-phosphoribose 1-diphosphate to form N'-(5'-phosphoribosyl)-ATP (PR-ATP). Has a crucial role in the pathway because the rate of histidine biosynthesis seems to be controlled primarily by regulation of HisG enzymatic activity. The protein is ATP phosphoribosyltransferase of Bacillus thuringiensis subsp. konkukian (strain 97-27).